Here is a 149-residue protein sequence, read N- to C-terminus: Calmodulin (149 aa).

Ala2 carries the post-translational modification N-acetylalanine. EF-hand domains are found at residues 8–43 (EQIA…LGQN), 44–79 (PTEA…KMKD), 81–116 (DTEE…LGEK), and 117–149 (LTDE…MMAK). Ca(2+) is bound by residues Asp21, Asp23, Asp25, Thr27, Glu32, Asp57, Asp59, Asn61, Thr63, Glu68, Asp94, Asp96, Asn98, and Glu105. Position 116 is an N6,N6,N6-trimethyllysine (Lys116). Asp130, Asp132, Asp134, His136, and Glu141 together coordinate Ca(2+).

Belongs to the calmodulin family.

Its function is as follows. Calmodulin mediates the control of a large number of enzymes, ion channels and other proteins by Ca(2+). Among the enzymes to be stimulated by the calmodulin-Ca(2+) complex are a number of protein kinases and phosphatases. This chain is Calmodulin, found in Tetrahymena pyriformis.